We begin with the raw amino-acid sequence, 95 residues long: Mammaglobin-B (95 aa).

The signal sequence occupies residues 1 to 18; the sequence is MKLLMVLMLAALLLHCYA. N-linked (GlcNAc...) asparagine glycosylation is present at N68.

As to quaternary structure, heterodimer of a lipophilin A and a lipophilin C (mammaglobin B) monomer associated head to head. Expressed in thymus, trachea, kidney, steroid responsive tissues (prostate, testis, uterus, breast and ovary) and salivary gland.

The protein localises to the secreted. May bind androgens and other steroids, may also bind estramustine, a chemotherapeutic agent used for prostate cancer. May be under transcriptional regulation of steroid hormones. This is Mammaglobin-B (SCGB2A1) from Homo sapiens (Human).